Reading from the N-terminus, the 725-residue chain is Another transcription unit protein (725 aa).

The segment covering 1-10 has biased composition (acidic residues); that stretch reads MGSQNSDDDS. 3 disordered regions span residues 1-379, 566-603, and 617-725; these read MGSQ…PETR, RQAM…EGSD, and YKKG…SDND. The span at 11–70 shows a compositional bias: low complexity; it reads GSSGSSRSGSRSVTPQGGSAPGSQRSRRSGSGSDRSRSGSRSSRSRSGSGSPRSARSGSA. Positions 82–101 are enriched in basic residues; it reads RSKRSRSAHSRRSGSARSRK. Polar residues predominate over residues 104–116; sequence TPESPQSHRSGSL. Residues 117-140 are compositionally biased toward low complexity; that stretch reads QSRKSGSPQSRRSGSPQSRKSGST. Over residues 141-160 the composition is skewed to basic residues; sequence HSRRSGSAHSRRSGSARSRK. Residues Ser-175, Ser-186, Ser-188, and Ser-190 each carry the phosphoserine modification. Positions 206 to 223 are enriched in basic residues; that stretch reads SRSRSRSRSGSRTSRSRS. Positions 224-242 are enriched in low complexity; the sequence is KTGTPSPNRSRSGSASGSG. Phosphoserine is present on residues Ser-265, Ser-267, and Ser-269. Phosphothreonine is present on Thr-286. Phosphoserine is present on residues Ser-288, Ser-290, and Ser-312. A compositionally biased stretch (acidic residues) spans 306 to 318; the sequence is GDADDISDDEDEA. Positions 325 to 353 are enriched in basic residues; the sequence is SPVRSKSRSQSKSHSHSRSMSHSRSRSRS. Basic and acidic residues predominate over residues 354-369; the sequence is RSRDKVESQVESAPKE. Residue Ser-355 is modified to Phosphoserine. A compositionally biased stretch (basic residues) spans 571-582; it reads NQHKSLPKKKKP. Thr-593 is subject to Phosphothreonine. 3 positions are modified to phosphoserine: Ser-595, Ser-602, and Ser-631. Position 632 is a phosphothreonine (Thr-632). Phosphoserine occurs at positions 635, 636, and 642. Over residues 644 to 665 the composition is skewed to basic and acidic residues; that stretch reads FEARRSKKVDKAKASKALRDSD. Positions 710–725 are enriched in gly residues; the sequence is SGSGSGSGSGSGSDND.

This is Another transcription unit protein (Atu) from Drosophila melanogaster (Fruit fly).